Reading from the N-terminus, the 895-residue chain is Zinc finger protein 281 (895 aa).

Disordered regions lie at residues 1 to 44 (MKIG…EMEP) and 63 to 113 (FTRP…AFPS). Lys2 is covalently cross-linked (Glycyl lysine isopeptide (Lys-Gly) (interchain with G-Cter in SUMO2)). The segment covering 7–36 (FLSGGGGTGSSGGSGSGGGGSGGGGGGGSS) has biased composition (gly residues). Residues Arg65, Lys101, and Lys128 each participate in a glycyl lysine isopeptide (Lys-Gly) (interchain with G-Cter in SUMO2) cross-link. Composition is skewed to basic and acidic residues over residues 130-140 (EKPADPEEQQS) and 202-218 (RTDDHHGTEEPKQDTNV). Disordered regions lie at residues 130-149 (EKPADPEEQQSHHHHHHHHY) and 183-253 (HVQQ…EGAI). Residues Lys213, Lys219, Lys225, Lys232, Lys242, and Lys259 each participate in a glycyl lysine isopeptide (Lys-Gly) (interchain with G-Cter in SUMO2) cross-link. 3 consecutive C2H2-type zinc fingers follow at residues 261 to 283 (HICDHCSAAFRSSYHLRRHVLIH), 289 to 311 (FQCSQCSMGFIQKYLLQRHEKIH), and 317 to 339 (FGCDQCSMKFIQKYHMERHKRTH). Glycyl lysine isopeptide (Lys-Gly) (interchain with G-Cter in SUMO2) cross-links involve residues Lys301 and Lys325. The segment at 345-367 (YKCDTCQQYFSRTDRLLKHRRTC) adopts a C2H2-type 4; atypical zinc-finger fold. Residue Lys373 forms a Glycyl lysine isopeptide (Lys-Gly) (interchain with G-Cter in SUMO2) linkage. A disordered region spans residues 377–427 (SAEPGSSNHTNMGNLAVLSQGNTSSSRRKTKSKSIAIENKEQKTGKTNESQ). Residues 379–398 (EPGSSNHTNMGNLAVLSQGN) show a composition bias toward polar residues. Ser395 is subject to Phosphoserine. Residues Lys409, Lys416, Lys460, and Lys477 each participate in a glycyl lysine isopeptide (Lys-Gly) (interchain with G-Cter in SUMO2) cross-link. Ser484 is subject to Phosphoserine. Glycyl lysine isopeptide (Lys-Gly) (interchain with G-Cter in SUMO2) cross-links involve residues Lys493, Lys498, Lys539, Lys599, Lys617, and Lys622. Positions 638–660 (SGEHSELVQEENLSPGTQTPSND) are disordered. Residues 648–660 (ENLSPGTQTPSND) show a composition bias toward polar residues. Ser651 is subject to Phosphoserine. Glycyl lysine isopeptide (Lys-Gly) (interchain with G-Cter in SUMO2) cross-links involve residues Lys661 and Lys670. The segment covering 778-789 (SSAFQSSSQKLT) has biased composition (polar residues). Positions 778–817 (SSAFQSSSQKLTSQKEQKNLESSTGFQIPSQELASQIDPQ) are disordered. Ser785 carries the post-translational modification Phosphoserine. Glycyl lysine isopeptide (Lys-Gly) (interchain with G-Cter in SUMO2) cross-links involve residues Lys787, Lys792, and Lys795. Polar residues predominate over residues 797-815 (LESSTGFQIPSQELASQID). Position 807 is a phosphoserine (Ser807). Residues Lys818 and Lys840 each participate in a glycyl lysine isopeptide (Lys-Gly) (interchain with G-Cter in SUMO2) cross-link. At Thr888 the chain carries Phosphothreonine.

The protein belongs to the krueppel C2H2-type zinc-finger protein family.

It is found in the nucleus. In terms of biological role, transcription repressor that plays a role in regulation of embryonic stem cells (ESCs) differentiation. Required for ESCs differentiation and acts by mediating autorepression of NANOG in ESCs: binds to the NANOG promoter and promotes association of NANOG protein to its own promoter and recruits the NuRD complex, which deacetylates histones. Not required for establishement and maintenance of ESCs. Represses the transcription of a number of genes including GAST, ODC1 and VIM. Binds to the G-rich box in the enhancer region of these genes. In Homo sapiens (Human), this protein is Zinc finger protein 281 (ZNF281).